A 260-amino-acid polypeptide reads, in one-letter code: 3'-5' ssDNA/RNA exonuclease TatD (260 aa).

A divalent metal cation is bound by residues glutamate 91, histidine 127, and histidine 152.

Belongs to the metallo-dependent hydrolases superfamily. TatD-type hydrolase family. TatD subfamily. Monomer. It depends on Mg(2+) as a cofactor.

The protein resides in the cytoplasm. Functionally, 3'-5' exonuclease that prefers single-stranded DNA and RNA. May play a role in the H(2)O(2)-induced DNA damage repair. This chain is 3'-5' ssDNA/RNA exonuclease TatD, found in Citrobacter koseri (strain ATCC BAA-895 / CDC 4225-83 / SGSC4696).